Here is a 1023-residue protein sequence, read N- to C-terminus: MGLGKGKDEYKLAATSEDGGKKDKKAKAKKDMDDLKKEVDLDDHKLTLDELHRKYGTDLTRGLSSSRAKEILARDGPNALTPPPTTPEWVKFCKQLFGGFSMLLWIGAILCFLAYGIQAASEDEPANDNLYLGIVLSAVVIITGCFSYYQEAKSSKIMESFKNLVPRQALGIRDGEKKNINAEEVVLGDLVEVKGGDRIPADLRIISAHGCKVDNSSLTGESEPQTRSPDFSNENPLETRNISFFSTNCIEGTARGIVINTEDRTVMGRIATLASSLEGGKTPIAIEIEHFIHIITGVAVFLGVSFFILSLILGYNWLEAVIFLIGIIVANVPEGLLATVTVCLTLTAKRMAKKNCLVKNLEAVETLGSTSTICSDKTGTLTQNRMTVAHMWFDNQIHEADTTENQSGTSFDRSSATWANLSRIAGLCNRAVFLADQSNIPILKRDVAGDASEAALLKCIELCCGSVNEMREKYPKIAEIPFNSTNKYQLSIHKNTTPGETKHLLVMKGAPERILDRCNSIVLQGKVQALDDEMKDAFQNAYVELGGLGERVLGFCHYHLPDDEFPEGFAFDTDEVNFPTENLCFVGLMAMIDPPRAAVPDAVGKCRSAGIKVIMVTGDHPITAKAIAKGVGIISEGNETVEDIAARLNVPVSEVNPRDAKACVVHGSELKDMTSEELDDLLKHHTEIVFARTSPQQKLIIVEGCQRQGAIVAVTGDGVNDSPALKKADIGVAMGIAGSDVSKQAADMILLDDNFASIVTGVEEGRLIFDNLKKSIAYTLTSNIPEISPFLLFIIANIPLPLGTVTILCIDLGTDMVPAISLAYEKAESDIMKRQPRNPKTDKLVNERLISIAYGQIGMMQATAGFFTYFVILAENGFLPMDLIGVRVLWDDKYVNDLEDSYGQQWTYERRKIVEYSCHTAFFASIVIVQWADLIICKTRRNSIVQQGMTNRILIFGLFEETALAAFLSYCPGMDVALRMYPMKPLWWFCAFPYSLLIFLYDEARRYILRRNPGGWVEKETYY.

Positions 1 to 5 are excised as a propeptide; the sequence is MGLGK. Basic and acidic residues predominate over residues 1–11; sequence MGLGKGKDEYK. A disordered region spans residues 1–33; it reads MGLGKGKDEYKLAATSEDGGKKDKKAKAKKDMD. Residues 6 to 87 are Cytoplasmic-facing; it reads GKDEYKLAAT…NALTPPPTTP (82 aa). Ser16 carries the post-translational modification Phosphoserine; by PKC. The interval 82–84 is interaction with phosphoinositide-3 kinase; the sequence is PPP. Residues 88 to 108 form a helical membrane-spanning segment; the sequence is EWVKFCKQLFGGFSMLLWIGA. The Extracellular portion of the chain corresponds to 109–131; the sequence is ILCFLAYGIQAASEDEPANDNLY. A helical membrane pass occupies residues 132 to 152; sequence LGIVLSAVVIITGCFSYYQEA. Topologically, residues 153 to 288 are cytoplasmic; sequence KSSKIMESFK…GGKTPIAIEI (136 aa). Residues 216–237 are disordered; that stretch reads SSLTGESEPQTRSPDFSNENPL. The helical transmembrane segment at 289 to 308 threads the bilayer; that stretch reads EHFIHIITGVAVFLGVSFFI. The Extracellular segment spans residues 309–320; the sequence is LSLILGYNWLEA. A helical transmembrane segment spans residues 321–338; it reads VIFLIGIIVANVPEGLLA. Residues 339-772 are Cytoplasmic-facing; it reads TVTVCLTLTA…EEGRLIFDNL (434 aa). Residue Asp376 is the 4-aspartylphosphate intermediate of the active site. Lys487 contacts ATP. Asp717 and Asp721 together coordinate Mg(2+). A helical membrane pass occupies residues 773–792; it reads KKSIAYTLTSNIPEISPFLL. The Extracellular segment spans residues 793–802; it reads FIIANIPLPL. Residues 803 to 823 form a helical membrane-spanning segment; it reads GTVTILCIDLGTDMVPAISLA. Residues 824-843 are Cytoplasmic-facing; the sequence is YEKAESDIMKRQPRNPKTDK. A helical membrane pass occupies residues 844–866; that stretch reads LVNERLISIAYGQIGMMQATAGF. The Extracellular portion of the chain corresponds to 867–918; sequence FTYFVILAENGFLPMDLIGVRVLWDDKYVNDLEDSYGQQWTYERRKIVEYSC. The helical transmembrane segment at 919-938 threads the bilayer; the sequence is HTAFFASIVIVQWADLIICK. At 939-951 the chain is on the cytoplasmic side; it reads TRRNSIVQQGMTN. At Ser943 the chain carries Phosphoserine; by PKA. The helical transmembrane segment at 952–970 threads the bilayer; that stretch reads RILIFGLFEETALAAFLSY. Topologically, residues 971 to 985 are extracellular; sequence CPGMDVALRMYPMKP. Residues 986 to 1006 traverse the membrane as a helical segment; the sequence is LWWFCAFPYSLLIFLYDEARR. The Cytoplasmic portion of the chain corresponds to 1007 to 1023; that stretch reads YILRRNPGGWVEKETYY.

It belongs to the cation transport ATPase (P-type) (TC 3.A.3) family. Type IIC subfamily. As to quaternary structure, the sodium/potassium-transporting ATPase is composed of a catalytic alpha subunit, an auxiliary non-catalytic beta subunit and an additional regulatory subunit.

The protein localises to the cell membrane. It is found in the sarcolemma. The enzyme catalyses K(+)(out) + Na(+)(in) + ATP + H2O = K(+)(in) + Na(+)(out) + ADP + phosphate + H(+). Its function is as follows. This is the catalytic component of the active enzyme, which catalyzes the hydrolysis of ATP coupled with the exchange of sodium and potassium ions across the plasma membrane. This action creates the electrochemical gradient of sodium and potassium ions, providing the energy for active transport of various nutrients. The chain is Sodium/potassium-transporting ATPase subunit alpha-1 (atp1a1) from Oreochromis mossambicus (Mozambique tilapia).